A 405-amino-acid polypeptide reads, in one-letter code: 8-amino-7-oxononanoate synthase (405 aa).

Arginine 23 contacts substrate. 114–115 (GY) provides a ligand contact to pyridoxal 5'-phosphate. Histidine 139 provides a ligand contact to substrate. 3 residues coordinate pyridoxal 5'-phosphate: serine 185, histidine 213, and threonine 245. N6-(pyridoxal phosphate)lysine is present on lysine 248. Threonine 366 contacts substrate.

Belongs to the class-II pyridoxal-phosphate-dependent aminotransferase family. BioF subfamily. In terms of assembly, homodimer. Requires pyridoxal 5'-phosphate as cofactor.

The enzyme catalyses 6-carboxyhexanoyl-[ACP] + L-alanine + H(+) = (8S)-8-amino-7-oxononanoate + holo-[ACP] + CO2. Its pathway is cofactor biosynthesis; biotin biosynthesis. Catalyzes the decarboxylative condensation of pimeloyl-[acyl-carrier protein] and L-alanine to produce 8-amino-7-oxononanoate (AON), [acyl-carrier protein], and carbon dioxide. This Delftia acidovorans (strain DSM 14801 / SPH-1) protein is 8-amino-7-oxononanoate synthase.